The sequence spans 373 residues: Flap endonuclease 1 (373 aa).

The N-domain stretch occupies residues 1–105 (MGIKGLNALI…GELEKRLKRR (105 aa)). Aspartate 34 provides a ligand contact to Mg(2+). Residues arginine 47 and arginine 71 each coordinate DNA. Residues aspartate 87, glutamate 159, glutamate 161, aspartate 180, and aspartate 182 each contribute to the Mg(2+) site. Residues 123 to 254 (DIAKFERRTV…VTAFKLIKEH (132 aa)) form an I-domain region. Position 159 (glutamate 159) interacts with DNA. DNA contacts are provided by glycine 232 and aspartate 234. Position 234 (aspartate 234) interacts with Mg(2+). Residues 340 to 348 (TQGRLDKFF) are interaction with PCNA. A disordered region spans residues 347–373 (FFVVKKRPAEEKKGKNTKEEKPKKKRK).

It belongs to the XPG/RAD2 endonuclease family. FEN1 subfamily. In terms of assembly, interacts with PCNA. Three molecules of FEN1 bind to one PCNA trimer with each molecule binding to one PCNA monomer. PCNA stimulates the nuclease activity without altering cleavage specificity. Mg(2+) is required as a cofactor. Post-translationally, phosphorylated. Phosphorylation upon DNA damage induces relocalization to the nuclear plasma.

It localises to the nucleus. It is found in the nucleolus. The protein resides in the nucleoplasm. The protein localises to the mitochondrion. Structure-specific nuclease with 5'-flap endonuclease and 5'-3' exonuclease activities involved in DNA replication and repair. During DNA replication, cleaves the 5'-overhanging flap structure that is generated by displacement synthesis when DNA polymerase encounters the 5'-end of a downstream Okazaki fragment. It enters the flap from the 5'-end and then tracks to cleave the flap base, leaving a nick for ligation. Also involved in the long patch base excision repair (LP-BER) pathway, by cleaving within the apurinic/apyrimidinic (AP) site-terminated flap. Acts as a genome stabilization factor that prevents flaps from equilibrating into structures that lead to duplications and deletions. Also possesses 5'-3' exonuclease activity on nicked or gapped double-stranded DNA, and exhibits RNase H activity. Also involved in replication and repair of rDNA and in repairing mitochondrial DNA. In Komagataella phaffii (strain GS115 / ATCC 20864) (Yeast), this protein is Flap endonuclease 1.